A 458-amino-acid polypeptide reads, in one-letter code: tRNA modification GTPase MnmE (458 aa).

R28, E85, and K124 together coordinate (6S)-5-formyl-5,6,7,8-tetrahydrofolate. Residues 220–381 (GMNVVIAGRP…LKEHLKAVMG (162 aa)) enclose the TrmE-type G domain. N230 is a K(+) binding site. GTP is bound by residues 230–235 (NAGKSS), 249–255 (TDIEGTT), and 274–277 (DTAG). S234 lines the Mg(2+) pocket. Residues T249, I251, and T254 each coordinate K(+). T255 is a Mg(2+) binding site. K458 is a (6S)-5-formyl-5,6,7,8-tetrahydrofolate binding site.

It belongs to the TRAFAC class TrmE-Era-EngA-EngB-Septin-like GTPase superfamily. TrmE GTPase family. As to quaternary structure, homodimer. Heterotetramer of two MnmE and two MnmG subunits. Requires K(+) as cofactor.

It localises to the cytoplasm. Exhibits a very high intrinsic GTPase hydrolysis rate. Involved in the addition of a carboxymethylaminomethyl (cmnm) group at the wobble position (U34) of certain tRNAs, forming tRNA-cmnm(5)s(2)U34. The sequence is that of tRNA modification GTPase MnmE from Chromohalobacter salexigens (strain ATCC BAA-138 / DSM 3043 / CIP 106854 / NCIMB 13768 / 1H11).